Here is a 93-residue protein sequence, read N- to C-terminus: UPF0223 protein LACR_0546 (93 aa).

It belongs to the UPF0223 family.

The protein is UPF0223 protein LACR_0546 of Lactococcus lactis subsp. cremoris (strain SK11).